A 1171-amino-acid polypeptide reads, in one-letter code: ATP-dependent helicase/deoxyribonuclease subunit B (1171 aa).

The UvrD-like helicase ATP-binding domain occupies 1–390 (MSLRFVIGRA…HPLVECIRSA (390 aa)). 8–15 (GRAGSGKS) contacts ATP. A UvrD-like helicase C-terminal domain is found at 281–587 (MEQPRFHSPA…QFANIPPSLD (307 aa)). [4Fe-4S] cluster-binding residues include Cys-805, Cys-1129, Cys-1132, and Cys-1138.

This sequence belongs to the helicase family. AddB/RexB type 1 subfamily. In terms of assembly, heterodimer of AddA and AddB. Mg(2+) serves as cofactor. [4Fe-4S] cluster is required as a cofactor.

Functionally, the heterodimer acts as both an ATP-dependent DNA helicase and an ATP-dependent, dual-direction single-stranded exonuclease. Recognizes the chi site generating a DNA molecule suitable for the initiation of homologous recombination. The AddB subunit has 5' -&gt; 3' nuclease activity but not helicase activity. The chain is ATP-dependent helicase/deoxyribonuclease subunit B from Bacillus cereus (strain ATCC 14579 / DSM 31 / CCUG 7414 / JCM 2152 / NBRC 15305 / NCIMB 9373 / NCTC 2599 / NRRL B-3711).